Here is a 378-residue protein sequence, read N- to C-terminus: Ferredoxin--NADP reductase, root isozyme, chloroplastic (378 aa).

The segment covering 1–17 (MATAVASQVAVSAPAGS) has biased composition (low complexity). The segment at 1-27 (MATAVASQVAVSAPAGSDRGLRSSGIQ) is disordered. A chloroplast-targeting transit peptide spans 1 to 62 (MATAVASQVA…PRHANKVLCM (62 aa)). The region spanning 93-221 (KEPYTATIVS…TGPSGKIMLL (129 aa)) is the FAD-binding FR-type domain. FAD is bound by residues 153 to 156 (RLYS), 174 to 176 (CVR), tyrosine 180, 195 to 197 (VCS), and threonine 237. NADP(+) is bound by residues serine 156 and arginine 176. NADP(+)-binding positions include threonine 237, 269 to 270 (VA), 299 to 300 (SR), lysine 309, 337 to 338 (GL), and glutamate 376.

The protein belongs to the ferredoxin--NADP reductase type 1 family. It depends on FAD as a cofactor.

The protein localises to the plastid. Its subcellular location is the chloroplast. The catalysed reaction is 2 reduced [2Fe-2S]-[ferredoxin] + NADP(+) + H(+) = 2 oxidized [2Fe-2S]-[ferredoxin] + NADPH. The protein operates within energy metabolism; photosynthesis. Its function is as follows. May play a key role in regulating the relative amounts of cyclic and non-cyclic electron flow to meet the demands of the plant for ATP and reducing power. Is involved in nitrate assimilation. In Oryza sativa subsp. japonica (Rice), this protein is Ferredoxin--NADP reductase, root isozyme, chloroplastic.